Consider the following 417-residue polypeptide: Exodeoxyribonuclease 7 large subunit (417 aa).

This sequence belongs to the XseA family. As to quaternary structure, heterooligomer composed of large and small subunits.

The protein localises to the cytoplasm. The catalysed reaction is Exonucleolytic cleavage in either 5'- to 3'- or 3'- to 5'-direction to yield nucleoside 5'-phosphates.. Its function is as follows. Bidirectionally degrades single-stranded DNA into large acid-insoluble oligonucleotides, which are then degraded further into small acid-soluble oligonucleotides. The protein is Exodeoxyribonuclease 7 large subunit of Lactococcus lactis subsp. cremoris (strain MG1363).